The chain runs to 234 residues: MPQGLAWLRYLGILLGMALGNEGLEPWPLTRSDECAITGFLRDKLQYRNRLQYMKHYFPINYRVSVPYEGVLRTANVTRLQRAQVSQQELRYLWVLVSLSATEWVQEVLLEGHPSWKYLEEVHTLLLDVKQGLGGVEVSPQVEAVLNLLSAPGSLKLVRPKALLDNCFRVMQLLYCPCCKESSVLNWQDCEAPQPQPRSPASAQCEAAQLYPLPQPPSTSLPRVLGPSAGPPTQ.

Residues 1–20 (MPQGLAWLRYLGILLGMALG) form the signal peptide. N-linked (GlcNAc...) asparagine glycosylation occurs at Asn-76. Positions 191 to 234 (EAPQPQPRSPASAQCEAAQLYPLPQPPSTSLPRVLGPSAGPPTQ) are disordered.

It belongs to the IL-34 family. Homodimer. Interacts with CSF1R.

It is found in the secreted. Cytokine that promotes the proliferation, survival and differentiation of monocytes and macrophages. Promotes the release of pro-inflammatory chemokines, and thereby plays an important role in innate immunity and in inflammatory processes. Plays an important role in the regulation of osteoclast proliferation and differentiation, and in the regulation of bone resorption. Signaling via CSF1R and its downstream effectors stimulates phosphorylation of MAPK1/ERK2 AND MAPK3/ERK1. The protein is Interleukin-34 of Bos taurus (Bovine).